The chain runs to 196 residues: Cytochrome c biogenesis ATP-binding export protein CcmA (196 aa).

The ABC transporter domain maps to 2-195; the sequence is LSFHQLKFNI…HIKSAQILQL (194 aa). 34–41 provides a ligand contact to ATP; that stretch reads GANGCGKT.

Belongs to the ABC transporter superfamily. CcmA exporter (TC 3.A.1.107) family. In terms of assembly, the complex is composed of two ATP-binding proteins (CcmA) and two transmembrane proteins (CcmB).

The protein localises to the cell inner membrane. The catalysed reaction is heme b(in) + ATP + H2O = heme b(out) + ADP + phosphate + H(+). Part of the ABC transporter complex CcmAB involved in the biogenesis of c-type cytochromes; once thought to export heme, this seems not to be the case, but its exact role is uncertain. Responsible for energy coupling to the transport system. In Rickettsia bellii (strain RML369-C), this protein is Cytochrome c biogenesis ATP-binding export protein CcmA.